Consider the following 484-residue polypeptide: Glutamate--tRNA ligase (484 aa).

The short motif at 12–22 is the 'HIGH' region element; sequence PSPTGEPHVGT. The 'KMSKS' region signature appears at 253–257; the sequence is KLSKR. Residue lysine 256 coordinates ATP.

Belongs to the class-I aminoacyl-tRNA synthetase family. Glutamate--tRNA ligase type 1 subfamily. Monomer.

It localises to the cytoplasm. The enzyme catalyses tRNA(Glu) + L-glutamate + ATP = L-glutamyl-tRNA(Glu) + AMP + diphosphate. Functionally, catalyzes the attachment of glutamate to tRNA(Glu) in a two-step reaction: glutamate is first activated by ATP to form Glu-AMP and then transferred to the acceptor end of tRNA(Glu). This is Glutamate--tRNA ligase from Rhizobium etli (strain CIAT 652).